The sequence spans 316 residues: Epoxide hydrolase 2 (316 aa).

The AB hydrolase-1 domain maps to 25–302; it reads PAVLFLHGFP…AAHFINQERP (278 aa). Asp-101 acts as the Nucleophile in catalysis. Tyr-150 provides a ligand contact to an epoxide. Tyr-230 functions as the Proton donor in the catalytic mechanism. Residue His-295 is the Proton acceptor of the active site.

Belongs to the AB hydrolase superfamily. Epoxide hydrolase family. In terms of assembly, homodimer. As to expression, highly expressed in young fruits 15 days after anthesis (15-DAA). Also observed in stems and leaves.

The enzyme catalyses an epoxide + H2O = an ethanediol. It catalyses the reaction (24S)-24,25-epoxycucurbitadienol + H2O = (24R)-24,25-dihydroxycucurbitadienol. It functions in the pathway secondary metabolite biosynthesis; terpenoid biosynthesis. In terms of biological role, epoxide hydrolase involved in the biosynthesis of cucurbitacin and mogroside tetracyclic triterpene natural products (e.g. siamenoside I and mogrosides IV, V and VI). Cucurbitacins have cytotoxic properties and exhibit deterrent taste as a defense barrier against herbivores. Mogrosides are nonsugar highly oxygenated compounds used as high-intensity zero-calorie sweeteners; they also possess pharmacological properties such as regulating immunity, lowering blood sugar and lipid levels, protecting the liver, and acting as antioxidants and antitumor agents. Catalyzes the hydrolysis of aromatic epoxide-containing substrates, such as the conversion of 24,25-epoxycucurbitadienol to 24,25-dihydroxycucurbitadienol. The protein is Epoxide hydrolase 2 of Siraitia grosvenorii (Monk's fruit).